A 460-amino-acid chain; its full sequence is UDP-N-acetylmuramoylalanine--D-glutamate ligase (460 aa).

An ATP-binding site is contributed by 120–126 (GSNGKTT).

It belongs to the MurCDEF family.

Its subcellular location is the cytoplasm. The enzyme catalyses UDP-N-acetyl-alpha-D-muramoyl-L-alanine + D-glutamate + ATP = UDP-N-acetyl-alpha-D-muramoyl-L-alanyl-D-glutamate + ADP + phosphate + H(+). The protein operates within cell wall biogenesis; peptidoglycan biosynthesis. Cell wall formation. Catalyzes the addition of glutamate to the nucleotide precursor UDP-N-acetylmuramoyl-L-alanine (UMA). This is UDP-N-acetylmuramoylalanine--D-glutamate ligase from Lactobacillus delbrueckii subsp. bulgaricus (strain ATCC 11842 / DSM 20081 / BCRC 10696 / JCM 1002 / NBRC 13953 / NCIMB 11778 / NCTC 12712 / WDCM 00102 / Lb 14).